Reading from the N-terminus, the 338-residue chain is MNLQKFPRYPLTFGPTPIQPLKRLSAHLGGKVELYAKRDDCNSGLAFGGNKTRKLEYLIPDALAQGCDTLVSIGGIQSNQTRQVAAVAAHLGMKCVLVQENWVNYHDAVYDRVGNIQMSRMMGADVRLVPDGFDIGFRKSWEDALADVRARGGKPYAIPAGCSDHPLGGLGFVGFAEEVRAQEAELGFKFDYVVVCSVTGSTQAGMVVGFAADGRADRVIGIDASAKPAQTREQILRIARNTADRVELGRDIASGDVVLDERFGGPEYGLPNEGTLEAIRLCAKLEGVLTDPVYEGKSMHGMIEKVRLGEFPAGSKVLYAHLGGVPALNAYSFLFRDG.

Lys-51 carries the N6-(pyridoxal phosphate)lysine modification. The active-site Nucleophile is the Ser-78.

It belongs to the ACC deaminase/D-cysteine desulfhydrase family. As to quaternary structure, homotrimer. Pyridoxal 5'-phosphate is required as a cofactor.

It catalyses the reaction 1-aminocyclopropane-1-carboxylate + H2O = 2-oxobutanoate + NH4(+). In terms of biological role, catalyzes a cyclopropane ring-opening reaction, the irreversible conversion of 1-aminocyclopropane-1-carboxylate (ACC) to ammonia and alpha-ketobutyrate. Allows growth on ACC as a nitrogen source. This Burkholderia thailandensis (strain ATCC 700388 / DSM 13276 / CCUG 48851 / CIP 106301 / E264) protein is 1-aminocyclopropane-1-carboxylate deaminase.